A 254-amino-acid chain; its full sequence is NAD-dependent protein deacylase (254 aa).

Residues methionine 1 to glutamate 250 enclose the Deacetylase sirtuin-type domain. Glycine 22–tryptophan 41 serves as a coordination point for NAD(+). Positions 66 and 69 each coordinate substrate. Glutamine 104–aspartate 107 serves as a coordination point for NAD(+). Histidine 122 serves as the catalytic Proton acceptor. The Zn(2+) site is built by cysteine 130, cysteine 133, cysteine 149, and cysteine 152. NAD(+) contacts are provided by residues glycine 189–serine 191, asparagine 215–glutamate 217, and alanine 233.

The protein belongs to the sirtuin family. Class III subfamily. It depends on Zn(2+) as a cofactor.

It is found in the cytoplasm. The enzyme catalyses N(6)-acetyl-L-lysyl-[protein] + NAD(+) + H2O = 2''-O-acetyl-ADP-D-ribose + nicotinamide + L-lysyl-[protein]. The catalysed reaction is N(6)-succinyl-L-lysyl-[protein] + NAD(+) + H2O = 2''-O-succinyl-ADP-D-ribose + nicotinamide + L-lysyl-[protein]. Its function is as follows. NAD-dependent lysine deacetylase and desuccinylase that specifically removes acetyl and succinyl groups on target proteins. Modulates the activities of several proteins which are inactive in their acylated form. This is NAD-dependent protein deacylase from Thermus thermophilus (strain ATCC BAA-163 / DSM 7039 / HB27).